A 389-amino-acid polypeptide reads, in one-letter code: Succinate--CoA ligase [ADP-forming] subunit beta (389 aa).

In terms of domain architecture, ATP-grasp spans 9–236 (RDLFEAHGVP…ERTEDPLEAK (228 aa)). Residues Lys45, 52 to 54 (GRG), Ala94, and Glu99 each bind ATP. The Mg(2+) site is built by Asn191 and Asp205. Substrate-binding positions include Asn256 and 318–320 (GIT).

The protein belongs to the succinate/malate CoA ligase beta subunit family. In terms of assembly, heterotetramer of two alpha and two beta subunits. Mg(2+) is required as a cofactor.

It catalyses the reaction succinate + ATP + CoA = succinyl-CoA + ADP + phosphate. The catalysed reaction is GTP + succinate + CoA = succinyl-CoA + GDP + phosphate. The protein operates within carbohydrate metabolism; tricarboxylic acid cycle; succinate from succinyl-CoA (ligase route): step 1/1. In terms of biological role, succinyl-CoA synthetase functions in the citric acid cycle (TCA), coupling the hydrolysis of succinyl-CoA to the synthesis of either ATP or GTP and thus represents the only step of substrate-level phosphorylation in the TCA. The beta subunit provides nucleotide specificity of the enzyme and binds the substrate succinate, while the binding sites for coenzyme A and phosphate are found in the alpha subunit. The chain is Succinate--CoA ligase [ADP-forming] subunit beta from Micrococcus luteus (strain ATCC 4698 / DSM 20030 / JCM 1464 / CCM 169 / CCUG 5858 / IAM 1056 / NBRC 3333 / NCIMB 9278 / NCTC 2665 / VKM Ac-2230) (Micrococcus lysodeikticus).